The following is a 314-amino-acid chain: Secreted frizzled-related protein 1 (314 aa).

The N-terminal stretch at 1–31 (MGIGRSEGGRRGAALGVLLALGAALLAVGSA) is a signal peptide. One can recognise an FZ domain in the interval 53-169 (TKPPQCVDIP…FPEGDVCIAM (117 aa)). 5 disulfides stabilise this stretch: C58–C121, C68–C114, C105–C140, C129–C166, and C133–C157. N-linked (GlcNAc...) asparagine glycosylation is present at N173. 3 cysteine pairs are disulfide-bonded: C186–C256, C189–C258, and C203–C306. One can recognise an NTR domain in the interval 186-306 (CPPCDNELKS…FMKKMKNHEC (121 aa)).

This sequence belongs to the secreted frizzled-related protein (sFRP) family. As to quaternary structure, interacts with WNT1, WNT2 and FRZD6. Interacts with WNT4, WNT8 and MYOC. In terms of tissue distribution, widely expressed. Absent from lung, liver and peripheral blood leukocytes. Highest levels in heart and fetal kidney. Also expressed in testis, ovary, fetal brain and lung, leiomyomal cells, myometrial cells and vascular smooth muscle cells. Expressed in foreskin fibroblasts and in keratinocytes.

It localises to the secreted. Soluble frizzled-related proteins (sFRPS) function as modulators of Wnt signaling through direct interaction with Wnts. They have a role in regulating cell growth and differentiation in specific cell types. SFRP1 decreases intracellular beta-catenin levels. Has antiproliferative effects on vascular cells, in vitro and in vivo, and can induce, in vivo, an angiogenic response. In vascular cell cycle, delays the G1 phase and entry into the S phase. In kidney development, inhibits tubule formation and bud growth in metanephroi. Inhibits WNT1/WNT4-mediated TCF-dependent transcription. The sequence is that of Secreted frizzled-related protein 1 (SFRP1) from Homo sapiens (Human).